A 377-amino-acid chain; its full sequence is MTDNSHTRVVVGMSGGVDSSVTALLLKQQGYDVVGVFMKNWDDTDENGVCTATEDYKDVAKVATQIGIPYYSVNFEKEYWDRVFTYFIDEFKKGRTPNPDVICNKEIKFKAFIEYANQLGADYVATGHYADLKRDEAGNMHLMRAKDQTKDQTYFLSQLDHAQLDKVLFPLAGYTKKEVRQLAKDAGLVVADKKDSVGICFIGEDGHFREFLSQYLPAQQGEMQTVDGKVVGTHAGLMYYTIGQRKGLGLGGTKENNDPWFVIGKDITKNVLYVGQGYENEHLYATHMEASDIHWVDDVVSRYGMEFHCTAKFRYRQKDEGVTVKLSDDGQMVTVTSDDPARAITPGQAVVFYDGDECLGSAIIDRAYNQERQLQYV.

ATP is bound by residues 12–19 (GMSGGVDS) and Met38. The tract at residues 98–100 (NPD) is interaction with target base in tRNA. Cys103 (nucleophile) is an active-site residue. The cysteines at positions 103 and 200 are disulfide-linked. Residue Gly127 coordinates ATP. The segment at 150–152 (KDQ) is interaction with tRNA. The active-site Cysteine persulfide intermediate is Cys200. The interaction with tRNA stretch occupies residues 314 to 315 (RY).

Belongs to the MnmA/TRMU family.

The protein localises to the cytoplasm. The enzyme catalyses S-sulfanyl-L-cysteinyl-[protein] + uridine(34) in tRNA + AH2 + ATP = 2-thiouridine(34) in tRNA + L-cysteinyl-[protein] + A + AMP + diphosphate + H(+). In terms of biological role, catalyzes the 2-thiolation of uridine at the wobble position (U34) of tRNA, leading to the formation of s(2)U34. This Limosilactobacillus fermentum (strain NBRC 3956 / LMG 18251) (Lactobacillus fermentum) protein is tRNA-specific 2-thiouridylase MnmA.